A 405-amino-acid polypeptide reads, in one-letter code: Opine dehydrogenase (405 aa).

Belongs to the lysopine/nopaline/octopine/opine/vitopine dehydrogenases family.

This chain is Opine dehydrogenase, found in Haliotis discus hannai (Japanese abalone).